The primary structure comprises 145 residues: Probable 4-amino-4-deoxy-L-arabinose-phosphoundecaprenol flippase subunit ArnF (145 aa).

The Cytoplasmic segment spans residues 1-3 (MAH). Residues 4–24 (LTLSIRGLLLALMSVLLISVA) form a helical membrane-spanning segment. At 25–61 (QLSMKWGMGTLNQLWSDLVMLWQGEDYSSLFSQALAP) the chain is on the periplasmic side. The helical transmembrane segment at 62–82 (VMAVGAGLFCYALSMACWVMA) threads the bilayer. Over 83 to 89 (LKRLPLS) the chain is Cytoplasmic. The chain crosses the membrane as a helical span at residues 90-110 (IAYPLLSLSYVLVYLGAVYLP). Residues 111 to 114 (WLNE) are Periplasmic-facing. The helical transmembrane segment at 115 to 135 (PLSWVKGTGIFLILLGLIFVL) threads the bilayer. Residues 136–145 (PKKNQTSDKS) are Cytoplasmic-facing.

This sequence belongs to the ArnF family. As to quaternary structure, heterodimer of ArnE and ArnF.

It localises to the cell inner membrane. The protein operates within bacterial outer membrane biogenesis; lipopolysaccharide biosynthesis. Translocates 4-amino-4-deoxy-L-arabinose-phosphoundecaprenol (alpha-L-Ara4N-phosphoundecaprenol) from the cytoplasmic to the periplasmic side of the inner membrane. This Shewanella sediminis (strain HAW-EB3) protein is Probable 4-amino-4-deoxy-L-arabinose-phosphoundecaprenol flippase subunit ArnF.